The sequence spans 65 residues: MSEQNICNQKDKSTLPFCQAHLCEETTNRLCVSNKAVYSLECKWAESENRVSEGRWGRGCFIGVG.

This is an uncharacterized protein from Homo sapiens (Human).